The primary structure comprises 199 residues: GTP cyclohydrolase 1 (199 aa).

Zn(2+) contacts are provided by Cys-89, His-92, and Cys-161.

The protein belongs to the GTP cyclohydrolase I family. As to quaternary structure, homomer.

It catalyses the reaction GTP + H2O = 7,8-dihydroneopterin 3'-triphosphate + formate + H(+). It functions in the pathway cofactor biosynthesis; 7,8-dihydroneopterin triphosphate biosynthesis; 7,8-dihydroneopterin triphosphate from GTP: step 1/1. The polypeptide is GTP cyclohydrolase 1 (Bifidobacterium longum (strain DJO10A)).